The chain runs to 134 residues: Ribonuclease VapC1 (134 aa).

One can recognise a PINc domain in the interval 4-123 (IIDTSIIIAL…LNVKDFKRIQ (120 aa)). Residues Asp6 and Asp97 each coordinate Mg(2+).

The protein belongs to the PINc/VapC protein family. Requires Mg(2+) as cofactor.

Functionally, toxic component of a type II toxin-antitoxin (TA) system. Has ssRNase activity. Upon expression in E.coli inhibits growth in liquid culture; this toxic effect is neutralized by coexpression with cognate antitoxin VapB1. Its RNase activity is partially inhibited in vitro by VapB1. In Rickettsia felis (strain ATCC VR-1525 / URRWXCal2) (Rickettsia azadi), this protein is Ribonuclease VapC1.